We begin with the raw amino-acid sequence, 345 residues long: Dihydroorotase (345 aa).

Residues His-13 and His-15 each contribute to the Zn(2+) site. Residues 15 to 17 (HLR) and Asn-41 contribute to the substrate site. The Zn(2+) site is built by Lys-99, His-136, and His-174. Lys-99 bears the N6-carboxylysine mark. His-136 is a substrate binding site. Leu-219 provides a ligand contact to substrate. Asp-247 contacts Zn(2+). Asp-247 is an active-site residue. Residues His-251 and Ala-263 each coordinate substrate.

The protein belongs to the metallo-dependent hydrolases superfamily. DHOase family. Class II DHOase subfamily. In terms of assembly, homodimer. Zn(2+) serves as cofactor.

It carries out the reaction (S)-dihydroorotate + H2O = N-carbamoyl-L-aspartate + H(+). It functions in the pathway pyrimidine metabolism; UMP biosynthesis via de novo pathway; (S)-dihydroorotate from bicarbonate: step 3/3. In terms of biological role, catalyzes the reversible cyclization of carbamoyl aspartate to dihydroorotate. This chain is Dihydroorotase, found in Hahella chejuensis (strain KCTC 2396).